The sequence spans 183 residues: tRNA-splicing endonuclease (183 aa).

Residues Y120, H128, and K159 contribute to the active site.

The protein belongs to the tRNA-intron endonuclease family. Archaeal short subfamily. In terms of assembly, homotetramer; although the tetramer contains four active sites, only two participate in the cleavage. Therefore, it should be considered as a dimer of dimers.

The enzyme catalyses pretRNA = a 3'-half-tRNA molecule with a 5'-OH end + a 5'-half-tRNA molecule with a 2',3'-cyclic phosphate end + an intron with a 2',3'-cyclic phosphate and a 5'-hydroxyl terminus.. Endonuclease that removes tRNA introns. Cleaves pre-tRNA at the 5'- and 3'-splice sites to release the intron. The products are an intron and two tRNA half-molecules bearing 2',3' cyclic phosphate and 5'-OH termini. Recognizes a pseudosymmetric substrate in which 2 bulged loops of 3 bases are separated by a stem of 4 bp. This Pyrobaculum aerophilum (strain ATCC 51768 / DSM 7523 / JCM 9630 / CIP 104966 / NBRC 100827 / IM2) protein is tRNA-splicing endonuclease.